A 145-amino-acid polypeptide reads, in one-letter code: Deoxyuridine 5'-triphosphate nucleotidohydrolase (145 aa).

Residues R62–G64, N75, T79–D81, and K89 each bind substrate.

The protein belongs to the dUTPase family. Mg(2+) is required as a cofactor.

The catalysed reaction is dUTP + H2O = dUMP + diphosphate + H(+). It participates in pyrimidine metabolism; dUMP biosynthesis; dUMP from dCTP (dUTP route): step 2/2. This enzyme is involved in nucleotide metabolism: it produces dUMP, the immediate precursor of thymidine nucleotides and it decreases the intracellular concentration of dUTP so that uracil cannot be incorporated into DNA. The chain is Deoxyuridine 5'-triphosphate nucleotidohydrolase from Helicobacter pylori (strain Shi470).